Here is a 161-residue protein sequence, read N- to C-terminus: RNA pyrophosphohydrolase (161 aa).

The Nudix hydrolase domain maps to P12–K154. The Nudix box motif lies at G46–G67.

Belongs to the Nudix hydrolase family. RppH subfamily. The cofactor is a divalent metal cation.

In terms of biological role, accelerates the degradation of transcripts by removing pyrophosphate from the 5'-end of triphosphorylated RNA, leading to a more labile monophosphorylated state that can stimulate subsequent ribonuclease cleavage. The sequence is that of RNA pyrophosphohydrolase from Rickettsia typhi (strain ATCC VR-144 / Wilmington).